The following is a 464-amino-acid chain: tRNA-2-methylthio-N(6)-dimethylallyladenosine synthase (464 aa).

The 118-residue stretch at 5–122 (RKLYVKSFGC…LPEMLARVRD (118 aa)) folds into the MTTase N-terminal domain. [4Fe-4S] cluster is bound by residues C14, C50, C85, C163, C167, and C170. The Radical SAM core domain maps to 149–383 (KKRGPTAFVT…VLEASKTAFD (235 aa)). One can recognise a TRAM domain in the interval 384–446 (RACMGRRFDI…PNSLAGQVVD (63 aa)).

Belongs to the methylthiotransferase family. MiaB subfamily. As to quaternary structure, monomer. Requires [4Fe-4S] cluster as cofactor.

The protein resides in the cytoplasm. The enzyme catalyses N(6)-dimethylallyladenosine(37) in tRNA + (sulfur carrier)-SH + AH2 + 2 S-adenosyl-L-methionine = 2-methylsulfanyl-N(6)-dimethylallyladenosine(37) in tRNA + (sulfur carrier)-H + 5'-deoxyadenosine + L-methionine + A + S-adenosyl-L-homocysteine + 2 H(+). Catalyzes the methylthiolation of N6-(dimethylallyl)adenosine (i(6)A), leading to the formation of 2-methylthio-N6-(dimethylallyl)adenosine (ms(2)i(6)A) at position 37 in tRNAs that read codons beginning with uridine. The chain is tRNA-2-methylthio-N(6)-dimethylallyladenosine synthase from Azorhizobium caulinodans (strain ATCC 43989 / DSM 5975 / JCM 20966 / LMG 6465 / NBRC 14845 / NCIMB 13405 / ORS 571).